Reading from the N-terminus, the 466-residue chain is Serine/threonine-protein kinase SSN3 (466 aa).

A Protein kinase domain is found at 32-396; that stretch reads YKILGFISSG…ARDALRHPWF (365 aa). 38–46 provides a ligand contact to ATP; sequence ISSGTYGRV. The tract at residues 58 to 105 is disordered; sequence ASAKSALPSSTRAALSLPKDKLPSPSFTEDSDPLNNPEMCMRPGDRPA. Lys114 contacts ATP. The Proton acceptor role is filled by Asp216. The segment at 421–466 is disordered; sequence THEDNGDAKMGSLPQSMAGGRLPSSSNFRPASGNIVQPAARKKARI.

The protein belongs to the protein kinase superfamily. CMGC Ser/Thr protein kinase family. CDC2/CDKX subfamily. In terms of assembly, component of the SRB8-11 complex, a regulatory module of the Mediator complex. The cofactor is Mg(2+).

The protein resides in the nucleus. It carries out the reaction L-seryl-[protein] + ATP = O-phospho-L-seryl-[protein] + ADP + H(+). The enzyme catalyses L-threonyl-[protein] + ATP = O-phospho-L-threonyl-[protein] + ADP + H(+). It catalyses the reaction [DNA-directed RNA polymerase] + ATP = phospho-[DNA-directed RNA polymerase] + ADP + H(+). Functionally, component of the SRB8-11 complex. The SRB8-11 complex is a regulatory module of the Mediator complex which is itself involved in regulation of basal and activated RNA polymerase II-dependent transcription. The SRB8-11 complex may be involved in the transcriptional repression of a subset of genes regulated by Mediator. It may inhibit the association of the Mediator complex with RNA polymerase II to form the holoenzyme complex. The SRB8-11 complex phosphorylates the C-terminal domain (CTD) of the largest subunit of RNA polymerase II. The chain is Serine/threonine-protein kinase SSN3 (SSN3) from Cryptococcus neoformans var. neoformans serotype D (strain B-3501A) (Filobasidiella neoformans).